A 300-amino-acid chain; its full sequence is Acetylglutamate kinase (300 aa).

Substrate-binding positions include 73–74, Arg95, and Asn197; that span reads GG.

This sequence belongs to the acetylglutamate kinase family. ArgB subfamily.

Its subcellular location is the cytoplasm. The enzyme catalyses N-acetyl-L-glutamate + ATP = N-acetyl-L-glutamyl 5-phosphate + ADP. It participates in amino-acid biosynthesis; L-arginine biosynthesis; N(2)-acetyl-L-ornithine from L-glutamate: step 2/4. Catalyzes the ATP-dependent phosphorylation of N-acetyl-L-glutamate. This chain is Acetylglutamate kinase, found in Bordetella parapertussis (strain 12822 / ATCC BAA-587 / NCTC 13253).